The primary structure comprises 893 residues: MKNKKALFIPLFIIILFIAFFNKIINFIINIKWFKEVNYLAVYFTKMRAIIILMIPIFIIFFISIWMYYKSLIINKNKSVVDIGLNKNNYGKKLFFIFNFIVSIFLAYIFSSSYWYRILQFNNSVDFNVKDPIFFKDVSFYIFKLPLFESLYKVIISLLLFLVITTFIAYFILEAKYKIQSRKDINLKNINYGIKSFAGKQLAIVSGLIILFISFGHLIKIWNLVYSSNGVSFGASYTDVHATLLFYKIIVVITLISSIVTLLSIVKGKFKPVSICIGITIFLIVSQNIASFLVQNFIVKSNEKTLEQPYIKNNIDLTRKAFALDDIEIRDFDIKNDLQKQDIADNKASIDNIRINSFKPTLEFYNQVQIIRYYYTFNDIDIDRYNINGKYNQVFLAAREIDTDALNPNTWQNRHLIYTHGFGAVMNKVNSVTSEGQPDFVIKDIPPYNKTNIKLTNPRIYFGEKTNDYVIVNTKINEFDYPREDSNKTNKYNGHAGIKMSFINRLLFAINKKDINFLLSKDIKKDSKIIINRNIVERAKKIAPFLTYDSDPYMVIYNGKIYWIIDAYTTTNRYPYSEPYDSINYIRNSAKVVIDSVDGDTNFYITDKKDPIVNNYAKTFKGLFKEEEDAPKEIREHFRYPKDLFSIQSKVLGKYHVKDPGVFYNGEDLWEVSKDQKHVEGETNTNDAPYIIMKLPDQNKEEMVLLNYFNVMKKDNMIALFGARMDGEQYGKKILYKLPSDKTVYSPYLFKQKINQDTNISKELSLWNREGSKVQYGDTIILPIKNSLLYIEPLYLRASGKNSIPEMKRVILSYNDKLVLSSSIQEGIKEIFNSKDNKINDKNEKDSTKTIDDSKLKKAQEYYNKAIEAQKNGDWTKYGENINELGNILNSIK.

Transmembrane regions (helical) follow at residues 9–29 (IPLF…NFII), 49–69 (AIII…WMYY), 94–114 (LFFI…SSSY), 154–174 (VIIS…FILE), 202–222 (LAIV…IKIW), 246–266 (FYKI…LSIV), and 273–293 (VSIC…ASFL).

It belongs to the UPF0182 family.

Its subcellular location is the cell membrane. In Clostridium botulinum (strain Okra / Type B1), this protein is UPF0182 protein CLD_0809.